We begin with the raw amino-acid sequence, 513 residues long: Maturase K (513 aa).

The protein belongs to the intron maturase 2 family. MatK subfamily.

Its subcellular location is the plastid. It localises to the chloroplast. Usually encoded in the trnK tRNA gene intron. Probably assists in splicing its own and other chloroplast group II introns. The polypeptide is Maturase K (Sporobolus indicus (Smut grass)).